Consider the following 313-residue polypeptide: Potassium channel subfamily K member 6 (313 aa).

Residues 1–4 (MRRG) lie on the Cytoplasmic side of the membrane. The helical transmembrane segment at 5-25 (ALLAGALAAYAAYLVLGALLV) threads the bilayer. Residues asparagine 79 and asparagine 85 are each glycosylated (N-linked (GlcNAc...) asparagine). The pore-forming intramembrane region spans 90 to 115 (AWDFASALFFASTLITTVGYGYTTPL). The K(+) site is built by threonine 106, valine 107, glycine 108, and tyrosine 109. The selectivity filter 1 stretch occupies residues 106-111 (TVGYGY). The helical transmembrane segment at 121–141 (AFSIAFALLGVPTTMLLLTAS) threads the bilayer. Residues 142-172 (AQRLSLLLTHVPLSWLSMRWGWDPRRAACWH) are Cytoplasmic-facing. The chain crosses the membrane as a helical span at residues 173 to 193 (LVALLGVVVTVCFLVPAVIFA). Residues 199-223 (WSFLDAFYFCFISLSTIGLGDYVPG) constitute an intramembrane region (pore-forming). Threonine 214, isoleucine 215, and glycine 216 together coordinate K(+). The interval 214–219 (TIGLGD) is selectivity filter 2. A helical membrane pass occupies residues 236–256 (VLVTVYLFLGLVAMVLVLQTF). Residues 257 to 313 (RHVSDLHGLTELILLPPPCPASFNADEDDRVDILGPQPESHQQLSASSHTDYASIPR) lie on the Cytoplasmic side of the membrane. The short motif at 282–290 (DEDDRVDIL) is the Lysosomal targeting signal element. The segment at 288–313 (DILGPQPESHQQLSASSHTDYASIPR) is disordered. Polar residues predominate over residues 295–307 (ESHQQLSASSHTD). The Lysosomal targeting signal motif lies at 308 to 312 (YASIP).

The protein belongs to the two pore domain potassium channel (TC 1.A.1.8) family. Homodimer; disulfide-linked. N-glycosylation is necessary for targeting to lysosomes. Widespread expression, detected in all tissues tested except for skeletal muscle. Strongest expression in placenta, pancreas, heart, colon and spleen, lower levels detected in peripheral blood leukocytes, lung, liver, kidney and thymus. Lowest expression detected in brain.

The protein localises to the late endosome membrane. Its subcellular location is the lysosome membrane. It carries out the reaction K(+)(in) = K(+)(out). In terms of biological role, k(+) channel that conducts outward rectifying currents at the membranes of the endolysosomal system. Active in lysosomes where it regulates lysosome numbers and size. In macrophages, enables K(+) efflux coupled to ATP-induced NLRP3 inflammasome activation upon bacterial infection. Cooperates with ATP-gated P2RX7 channels to activate NLRP3 inflammasome, with P2RX7 conducting Ca(2+) and Na(+) influx that sets the membrane potential for K(+) efflux. Does not display channel activity. This chain is Potassium channel subfamily K member 6, found in Homo sapiens (Human).